Here is a 351-residue protein sequence, read N- to C-terminus: Auxin-responsive protein IAA27 (351 aa).

Residues 1–37 (MMNLISFETPPLGRRSQDGGSSSSSITAATTTTNKAK) are disordered. Residues 21–34 (SSSSSITAATTTTN) are compositionally biased toward low complexity. The 95-residue stretch at 233-327 (NMFAKVHMDG…SAKRLYIAKN (95 aa)) folds into the PB1 domain.

It belongs to the Aux/IAA family. Homodimers and heterodimers. As to expression, expressed in roots and seedlings.

It is found in the nucleus. Its function is as follows. Aux/IAA proteins are short-lived transcriptional factors that function as repressors of early auxin response genes at low auxin concentrations. In Oryza sativa subsp. japonica (Rice), this protein is Auxin-responsive protein IAA27 (IAA27).